A 308-amino-acid chain; its full sequence is Paired box protein 3 homolog (308 aa).

Residues 13–140 (GQGRVNQLGG…PAIKRLIGNK (128 aa)) constitute a DNA-binding region (paired). A PAI subdomain region spans residues 16 to 72 (RVNQLGGVFINGRPLPIHVRHAIISMAKKGIKPCHISRQLKVSHGAVSKILNRYAET). The tract at residues 92–140 (AVEKEILIACDENPQMSAAELRDWLIHKDICTKGNAPTVPAIKRLIGNK) is RED subdomain. The tract at residues 168–191 (CSKSSSDDEEGSSPSNDASSRRNR) is disordered. A DNA-binding region (homeobox) is located at residues 187 to 246 (SRRNRTSFTAEQLDVLENAFRADTYPHANARESISKETGLSEEKIMTWFSNRRARCRKNM).

This sequence belongs to the paired homeobox family.

The protein localises to the nucleus. Functionally, transcriptional activator. Regulates the lateral/ventral epidermal cell fate decision. This Caenorhabditis elegans protein is Paired box protein 3 homolog.